Consider the following 207-residue polypeptide: Small ribosomal subunit protein uS4 (207 aa).

The disordered stretch occupies residues 31 to 54 (KSKFETKPGQHGRTSGSRTSDFGL). Positions 42–52 (GRTSGSRTSDF) are enriched in polar residues. Residues 97 to 158 (SRLDNVVYRM…KAKKQLRVTE (62 aa)) form the S4 RNA-binding domain.

Belongs to the universal ribosomal protein uS4 family. As to quaternary structure, part of the 30S ribosomal subunit. Contacts protein S5. The interaction surface between S4 and S5 is involved in control of translational fidelity.

Its function is as follows. One of the primary rRNA binding proteins, it binds directly to 16S rRNA where it nucleates assembly of the body of the 30S subunit. In terms of biological role, with S5 and S12 plays an important role in translational accuracy. This chain is Small ribosomal subunit protein uS4, found in Methylibium petroleiphilum (strain ATCC BAA-1232 / LMG 22953 / PM1).